A 116-amino-acid polypeptide reads, in one-letter code: Ribonuclease P protein component (116 aa).

It belongs to the RnpA family. As to quaternary structure, consists of a catalytic RNA component (M1 or rnpB) and a protein subunit.

The catalysed reaction is Endonucleolytic cleavage of RNA, removing 5'-extranucleotides from tRNA precursor.. Its function is as follows. RNaseP catalyzes the removal of the 5'-leader sequence from pre-tRNA to produce the mature 5'-terminus. It can also cleave other RNA substrates such as 4.5S RNA. The protein component plays an auxiliary but essential role in vivo by binding to the 5'-leader sequence and broadening the substrate specificity of the ribozyme. In Gluconacetobacter diazotrophicus (strain ATCC 49037 / DSM 5601 / CCUG 37298 / CIP 103539 / LMG 7603 / PAl5), this protein is Ribonuclease P protein component.